We begin with the raw amino-acid sequence, 89 residues long: Small ribosomal subunit protein bS20 (89 aa).

Belongs to the bacterial ribosomal protein bS20 family.

Binds directly to 16S ribosomal RNA. This Wolbachia sp. subsp. Brugia malayi (strain TRS) protein is Small ribosomal subunit protein bS20.